The primary structure comprises 70 residues: MSFSVSCKTPKTTKLLVSSISESAVALIIITIRILFSIGKSDFKKIISKEINGAETIYYRNIPESKPQGS.

A helical transmembrane segment spans residues 15-37; that stretch reads LLVSSISESAVALIIITIRILFS.

Its subcellular location is the membrane. This is an uncharacterized protein from Saccharomyces cerevisiae (strain ATCC 204508 / S288c) (Baker's yeast).